Reading from the N-terminus, the 222-residue chain is MDEWYGQVAPREKLLKYGAAVLTDAELLAIFLRTGIPGMHVMKMAEYLIETFGSLHGLISADYQTLCAHKGIGASKYSQIQAIGELACRCFSSHLMRESVLLNPGITQKFLQNILSHREREIFLVVFLDNQHRVIRHEEMFTGTISSVEVHPREIVREALKVNAAALILAHNHPSGKAEPSQADRLITTQVIKACSLLDIRVLDHLVVGRGECVSFAERGWL.

One can recognise an MPN domain in the interval 100 to 222 (VLLNPGITQK…CVSFAERGWL (123 aa)). Histidine 171, histidine 173, and aspartate 184 together coordinate Zn(2+). The JAMM motif signature appears at 171-184 (HNHPSGKAEPSQAD).

It belongs to the UPF0758 family. YicR subfamily.

This chain is UPF0758 protein YPN_3801, found in Yersinia pestis bv. Antiqua (strain Nepal516).